The sequence spans 453 residues: Ribulose bisphosphate carboxylase large chain (453 aa).

Residues 1-2 (MS) constitute a propeptide that is removed on maturation. Proline 3 carries the N-acetylproline modification. Lysine 14 is modified (N6,N6,N6-trimethyllysine). Substrate is bound by residues asparagine 123 and threonine 173. Lysine 175 acts as the Proton acceptor in catalysis. Lysine 177 provides a ligand contact to substrate. Lysine 201, aspartate 203, and glutamate 204 together coordinate Mg(2+). The residue at position 201 (lysine 201) is an N6-carboxylysine. Histidine 294 functions as the Proton acceptor in the catalytic mechanism. Positions 295, 327, and 379 each coordinate substrate.

The protein belongs to the RuBisCO large chain family. Type I subfamily. As to quaternary structure, heterohexadecamer of 8 large chains and 8 small chains; disulfide-linked. The disulfide link is formed within the large subunit homodimers. Mg(2+) serves as cofactor. The disulfide bond which can form in the large chain dimeric partners within the hexadecamer appears to be associated with oxidative stress and protein turnover.

It is found in the plastid. The protein localises to the chloroplast. The catalysed reaction is 2 (2R)-3-phosphoglycerate + 2 H(+) = D-ribulose 1,5-bisphosphate + CO2 + H2O. The enzyme catalyses D-ribulose 1,5-bisphosphate + O2 = 2-phosphoglycolate + (2R)-3-phosphoglycerate + 2 H(+). In terms of biological role, ruBisCO catalyzes two reactions: the carboxylation of D-ribulose 1,5-bisphosphate, the primary event in carbon dioxide fixation, as well as the oxidative fragmentation of the pentose substrate in the photorespiration process. Both reactions occur simultaneously and in competition at the same active site. This Asperula laevigata (Smooth woodruff) protein is Ribulose bisphosphate carboxylase large chain.